The following is a 204-amino-acid chain: UPF0637 protein lin1053 (204 aa).

It belongs to the UPF0637 family.

The sequence is that of UPF0637 protein lin1053 from Listeria innocua serovar 6a (strain ATCC BAA-680 / CLIP 11262).